The following is a 366-amino-acid chain: Bacteriochlorophyll a protein (366 aa).

Residues His-111, His-146, His-290, His-297, and His-298 each contribute to the bacteriochlorophyll a site.

In terms of assembly, homotrimer. Each subunit contains 7 molecules of bacteriochlorophyll a.

Functionally, intermediary in the transfer of excitation energy from the chlorophyll to the reaction centers. The protein is Bacteriochlorophyll a protein (fmoA) of Chlorobaculum tepidum (strain ATCC 49652 / DSM 12025 / NBRC 103806 / TLS) (Chlorobium tepidum).